The sequence spans 213 residues: Cysteine dioxygenase (213 aa).

Positions 100, 102, and 160 each coordinate Fe cation. The segment at residues 107–177 is a cross-link (3'-(S-cysteinyl)-tyrosine (Cys-Tyr)); the sequence is CVMKVLKGSL…TNFAISLHLY (71 aa).

It belongs to the cysteine dioxygenase family. Fe cation serves as cofactor. In terms of processing, the thioether cross-link between Cys-107 and Tyr-177 plays a structural role through stabilizing the Fe(2+) ion, and prevents the production of highly damaging free hydroxyl radicals by holding the oxygen radical via hydroxyl hydrogen.

It catalyses the reaction L-cysteine + O2 = 3-sulfino-L-alanine + H(+). The protein is Cysteine dioxygenase (CDO1) of Ajellomyces capsulatus (strain G186AR / H82 / ATCC MYA-2454 / RMSCC 2432) (Darling's disease fungus).